A 407-amino-acid chain; its full sequence is PWWP domain-containing protein 3 (407 aa).

The interval 1-46 (MMVARTRSQKRKLEEINNQKKIKTKKKATGQQTSNTKNLRDVKKKG) is disordered. The region spanning 63 to 129 (NGEYVLAKMS…SSNVLPLTVD (67 aa)) is the PWWP domain. Phosphoserine is present on residues Ser-160 and Ser-162. Residues 163 to 248 (DVEEDEFEPE…PIPSPKKTAK (86 aa)) form a disordered region. Residues 172 to 208 (ENTRKKLQKPIEKPKKEKIEATPKIDGGKRLKNEKSS) show a composition bias toward basic and acidic residues. 3 positions are modified to phosphoserine: Ser-236, Ser-238, and Ser-242.

Component of the mst2 complex composed of at least eaf6, mst2, nto1, pdp3, ptf1, ptf2 and tfg3.

The protein resides in the nucleus. In terms of biological role, component of the mst2 complex which is a highly specific H3 lysine 14 (H3K14) acetyltransferase that functions together with gcn5 to regulate global levels of H3K14 acetylation (H3K14ac), critical for DNA damage checkpoint activation. This chain is PWWP domain-containing protein 3 (pdp3), found in Schizosaccharomyces pombe (strain 972 / ATCC 24843) (Fission yeast).